A 225-amino-acid chain; its full sequence is Lipid A 4'-phosphatase (225 aa).

A run of 6 helical transmembrane segments spans residues 29–49 (SAFTGKVIWVPMYASILYILL), 51–71 (NFHWKVALCYVVAIALTITFA), 110–130 (FGFPSCHAANSFGLAIFLICL), 136–156 (LSIFIVLWAFTNSYTRLYLGL), 160–180 (GDLVAGAIIGGFGGWLFYFIA), and 203–223 (TEVMIYTGLLTLAGIIIYSIV).

Belongs to the lipid A LpxF 4'-phosphatase family.

It localises to the cell inner membrane. It participates in bacterial outer membrane biogenesis; LPS lipid A biosynthesis. In terms of biological role, probably removes the 4'-phosphate group from lipid A. Removal of this phosphate group confers resistance to cationic antimicrobial peptides (CAMPs), inflammation-associated peptides produced by the human host. This LPS modification helps maintain the stability of this commensal bacterium in gut microbiota. This chain is Lipid A 4'-phosphatase, found in Bacteroides thetaiotaomicron (strain ATCC 29148 / DSM 2079 / JCM 5827 / CCUG 10774 / NCTC 10582 / VPI-5482 / E50).